Reading from the N-terminus, the 347-residue chain is MTKKIKIGNLYIGGGEPIRIQSMTNTKTKDIEKTVEQILRLESLGCEIIRVAVPDMESAKAIEKIKAKIHIPIVADIHFDYKLALEAIYNGADKIRINPGNIGGPEKVKKIVDEAKRYGIPIRVGANSGSLPKEILEKYKSPTPEAIVEAALNQVRLLESFDFDNIVISVKSSDILTTIKSYEILSRRTSYPLHVGLTEAGTFIAGCVKSSIAIGHLLLQGIGDTIRVSLTDDPEKEVTVAKEILKGLKLKKGVNIISCPTCARCNVDLIKIANEVEKRIGNLDLDISVAIMGCAVNGPGEAKEADIGIACGIGEGLLFKKGKIVKKVKEDDLVDELIREIYSLYKT.

Positions 259, 262, 294, and 301 each coordinate [4Fe-4S] cluster.

This sequence belongs to the IspG family. [4Fe-4S] cluster is required as a cofactor.

It carries out the reaction (2E)-4-hydroxy-3-methylbut-2-enyl diphosphate + oxidized [flavodoxin] + H2O + 2 H(+) = 2-C-methyl-D-erythritol 2,4-cyclic diphosphate + reduced [flavodoxin]. Its pathway is isoprenoid biosynthesis; isopentenyl diphosphate biosynthesis via DXP pathway; isopentenyl diphosphate from 1-deoxy-D-xylulose 5-phosphate: step 5/6. In terms of biological role, converts 2C-methyl-D-erythritol 2,4-cyclodiphosphate (ME-2,4cPP) into 1-hydroxy-2-methyl-2-(E)-butenyl 4-diphosphate. This chain is 4-hydroxy-3-methylbut-2-en-1-yl diphosphate synthase (flavodoxin), found in Caldicellulosiruptor saccharolyticus (strain ATCC 43494 / DSM 8903 / Tp8T 6331).